We begin with the raw amino-acid sequence, 434 residues long: Trigger factor (434 aa).

The PPIase FKBP-type domain maps to 160–245; it reads GDKVKMNFVG…LTEVQAANLP (86 aa).

Belongs to the FKBP-type PPIase family. Tig subfamily.

Its subcellular location is the cytoplasm. It carries out the reaction [protein]-peptidylproline (omega=180) = [protein]-peptidylproline (omega=0). Its function is as follows. Involved in protein export. Acts as a chaperone by maintaining the newly synthesized protein in an open conformation. Functions as a peptidyl-prolyl cis-trans isomerase. The polypeptide is Trigger factor (Shewanella baltica (strain OS223)).